The sequence spans 151 residues: Putative UPF0320 protein YFL063W (151 aa).

It belongs to the UPF0320 family.

The sequence is that of Putative UPF0320 protein YFL063W from Saccharomyces cerevisiae (strain ATCC 204508 / S288c) (Baker's yeast).